Consider the following 949-residue polypeptide: MAM domain-containing glycosylphosphatidylinositol anchor protein 2 (949 aa).

The first 25 residues, 1-25, serve as a signal peptide directing secretion; the sequence is MDLVYGLVWLLTVLLEGISGQGVYA. 2 Ig-like domains span residues 27–127 and 134–232; these read PTVR…IRVD and PVVT…KMVS. 2 disulfides stabilise this stretch: Cys62–Cys110 and Cys159–Cys216. Asn92, Asn213, and Asn237 each carry an N-linked (GlcNAc...) asparagine glycan. 4 Ig-like domains span residues 242-328, 340-436, 442-533, and 540-627; these read PSIK…NIIV, PDPY…VNIS, PNLT…ALVQ, and PAVE…FLVT. 2 cysteine pairs are disulfide-bonded: Cys264/Cys310 and Cys359/Cys417. N-linked (GlcNAc...) asparagine glycans are attached at residues Asn434, Asn443, Asn504, Asn610, and Asn703. Disulfide bonds link Cys465/Cys515 and Cys561/Cys611. A Fibronectin type-III domain is found at 638–738; that stretch reads DTYNPVWQNR…TIRVIKYTGE (101 aa). The MAM domain maps to 739–914; the sequence is FHCGFEDGNI…VSIAEGECAK (176 aa). The GPI-anchor amidated aspartate moiety is linked to residue Asp924. Residues 925–949 constitute a propeptide, removed in mature form; that stretch reads GAVGILVHIWLFPVIILISILSPRR.

Interacts (through the Ig-like domains) with NLGN2. In terms of tissue distribution, expressed predominantly in neuronal tissue. Expressed in brain.

Its subcellular location is the cell membrane. In terms of biological role, may be involved in cell-cell interactions. This chain is MAM domain-containing glycosylphosphatidylinositol anchor protein 2 (Mdga2), found in Rattus norvegicus (Rat).